The following is a 396-amino-acid chain: MRKLNPYFGEFGGQYVPEILIPALDQLEQAFIDAQNDPSFQQEFQDLLKNYAGRPTALTLCRNLTQGTRTRLYLKREDLLHGGAHKTNQVLGQALLAKRMGKTEIIAETGAGQHGVATALACALLNMKCRIYMGAKDVERQSPNVFRMRLMGAEVIPVHSGSSTLKDACNEALRDWSGCYERAHYLLGTAAGPHPYPTIVREFQRMIGDEAKAQILAREGRLPDAVIACIGGGSNAIGLFASFIPETSVQLIGVEPAGKGIETGEHGAPLKHGKLGIYFGMKSPIMQTEEGQIEESYSISAGLDFPSVGPQHAHLNSIGRADYVSVTDDEAIEAFKTLSRREGIIPALESSHALAYALKLIAQNPDKEQLLIVNLSGRGDKDIFTVNDILAARGEI.

At lysine 86 the chain carries N6-(pyridoxal phosphate)lysine.

Belongs to the TrpB family. In terms of assembly, tetramer of two alpha and two beta chains. Pyridoxal 5'-phosphate serves as cofactor.

The catalysed reaction is (1S,2R)-1-C-(indol-3-yl)glycerol 3-phosphate + L-serine = D-glyceraldehyde 3-phosphate + L-tryptophan + H2O. The protein operates within amino-acid biosynthesis; L-tryptophan biosynthesis; L-tryptophan from chorismate: step 5/5. The beta subunit is responsible for the synthesis of L-tryptophan from indole and L-serine. The sequence is that of Tryptophan synthase beta chain from Proteus mirabilis (strain HI4320).